Here is a 162-residue protein sequence, read N- to C-terminus: NADH-quinone oxidoreductase subunit I (162 aa).

2 consecutive 4Fe-4S ferredoxin-type domains span residues 53–83 and 93–122; these read LRRYPNGEERCIACKLCEAVCPALAITIDSA and TRYDIDLFKCIFCGFCEESCPVDSIVETHI. Residues Cys63, Cys66, Cys69, Cys73, Cys102, Cys105, Cys108, and Cys112 each contribute to the [4Fe-4S] cluster site.

This sequence belongs to the complex I 23 kDa subunit family. NDH-1 is composed of 14 different subunits. Subunits NuoA, H, J, K, L, M, N constitute the membrane sector of the complex. [4Fe-4S] cluster is required as a cofactor.

The protein localises to the cell inner membrane. The enzyme catalyses a quinone + NADH + 5 H(+)(in) = a quinol + NAD(+) + 4 H(+)(out). Functionally, NDH-1 shuttles electrons from NADH, via FMN and iron-sulfur (Fe-S) centers, to quinones in the respiratory chain. The immediate electron acceptor for the enzyme in this species is believed to be ubiquinone. Couples the redox reaction to proton translocation (for every two electrons transferred, four hydrogen ions are translocated across the cytoplasmic membrane), and thus conserves the redox energy in a proton gradient. This Xanthomonas oryzae pv. oryzae (strain MAFF 311018) protein is NADH-quinone oxidoreductase subunit I.